Reading from the N-terminus, the 1072-residue chain is Translation initiation factor IF-2 (1072 aa).

Disordered regions lie at residues 55–369 (ILDK…TGTA) and 426–452 (ELVD…VSKQ). Low complexity-rich tracts occupy residues 91–100 (AEASQAAEPA), 108–118 (EPATFAAEEPV), 126–179 (APRA…AEVA), and 186–212 (EAPQ…PSVQ). The span at 218 to 230 (PQPPPRSPVPPAV) shows a compositional bias: pro residues. Low complexity predominate over residues 231–245 (RTPSSTSSSATVVSR). Residues 253 to 307 (QRGGPGGGRPGGPGGPGGRPGGPGGPGGRPGGPGGPGGRPGGPGGPGGRPGGPGG) are compositionally biased toward gly residues. Residues 426-436 (ELVDVSKNKER) are compositionally biased toward basic and acidic residues. Positions 570–737 (PRPPVVAIMG…NLALQAEVLE (168 aa)) constitute a tr-type G domain. Residues 579 to 586 (GHVDHGKT) are G1. GTP is bound at residue 579-586 (GHVDHGKT). The interval 604-608 (GITQH) is G2. The segment at 625–628 (DTPG) is G3. Residues 625-629 (DTPGH) and 679-682 (NKMD) each bind GTP. The tract at residues 679–682 (NKMD) is G4. The interval 715 to 717 (SAK) is G5.

The protein belongs to the TRAFAC class translation factor GTPase superfamily. Classic translation factor GTPase family. IF-2 subfamily.

It localises to the cytoplasm. Its function is as follows. One of the essential components for the initiation of protein synthesis. Protects formylmethionyl-tRNA from spontaneous hydrolysis and promotes its binding to the 30S ribosomal subunits. Also involved in the hydrolysis of GTP during the formation of the 70S ribosomal complex. This Myxococcus xanthus (strain DK1622) protein is Translation initiation factor IF-2.